Here is a 151-residue protein sequence, read N- to C-terminus: Ribosome maturation factor RimP (151 aa).

Belongs to the RimP family.

It localises to the cytoplasm. Required for maturation of 30S ribosomal subunits. This chain is Ribosome maturation factor RimP, found in Endomicrobium trichonymphae.